Reading from the N-terminus, the 292-residue chain is NAD kinase (292 aa).

The active-site Proton acceptor is the Asp-73. Residues 73-74 (DG), 147-148 (NE), His-158, Arg-175, Asp-177, 188-193 (TAYSLS), and Gln-247 contribute to the NAD(+) site.

This sequence belongs to the NAD kinase family. A divalent metal cation serves as cofactor.

The protein resides in the cytoplasm. It carries out the reaction NAD(+) + ATP = ADP + NADP(+) + H(+). Its function is as follows. Involved in the regulation of the intracellular balance of NAD and NADP, and is a key enzyme in the biosynthesis of NADP. Catalyzes specifically the phosphorylation on 2'-hydroxyl of the adenosine moiety of NAD to yield NADP. The sequence is that of NAD kinase from Salmonella dublin (strain CT_02021853).